The sequence spans 462 residues: Arginine biosynthesis bifunctional protein ArgJ, mitochondrial (462 aa).

Residues Thr200, Lys228, Thr239, Glu326, Asn457, and Thr462 each contribute to the substrate site. Thr239 functions as the Nucleophile in the catalytic mechanism.

The protein belongs to the ArgJ family. Heterodimer of an alpha and a beta chain. In terms of processing, the alpha and beta chains are autoproteolytically processed from a single precursor protein within the mitochondrion.

The protein resides in the mitochondrion matrix. The enzyme catalyses N(2)-acetyl-L-ornithine + L-glutamate = N-acetyl-L-glutamate + L-ornithine. It carries out the reaction L-glutamate + acetyl-CoA = N-acetyl-L-glutamate + CoA + H(+). It functions in the pathway amino-acid biosynthesis; L-arginine biosynthesis; L-ornithine and N-acetyl-L-glutamate from L-glutamate and N(2)-acetyl-L-ornithine (cyclic): step 1/1. Its pathway is amino-acid biosynthesis; L-arginine biosynthesis; N(2)-acetyl-L-ornithine from L-glutamate: step 1/4. Its function is as follows. Catalyzes two activities which are involved in the cyclic version of arginine biosynthesis: the synthesis of acetylglutamate from glutamate and acetyl-CoA, and of ornithine by transacetylation between acetylornithine and glutamate. The polypeptide is Arginine biosynthesis bifunctional protein ArgJ, mitochondrial (Pyrenophora tritici-repentis (strain Pt-1C-BFP) (Wheat tan spot fungus)).